The following is a 344-amino-acid chain: Melanocyte-stimulating hormone receptor (344 aa).

At 1 to 37 (MPMQGAQRKLLGSLNSTPTATSNPGLAANHTGAPCLE) the chain is on the extracellular side. Asn29 carries N-linked (GlcNAc...) asparagine glycosylation. A helical membrane pass occupies residues 38–63 (VSIPDGLFLSLGLVSLVENVLVVAAI). The Cytoplasmic segment spans residues 64–72 (AKNRNLHSS). Residues 73–93 (MYXFICCLALSDLLVSGSNML) traverse the membrane as a helical segment. At 94-118 (ETAIILLLEAGTLATRASVVQQLHN) the chain is on the extracellular side. A helical transmembrane segment spans residues 119-140 (TIDVLTCSSMLCSLCFLGAIAV). The Cytoplasmic portion of the chain corresponds to 141-163 (DRYISIFYALRYHSIMTLPRAQR). Residues 164 to 183 (AIAAIWVASVLSSTLFITYY) form a helical membrane-spanning segment. Residues 184 to 191 (DHAAVLLC) are Extracellular-facing. A helical transmembrane segment spans residues 192–211 (LVVFFLAMLVLMAVLYVHML). Residues 212-240 (ARACQHAQGIIRLHNRQLPAHKGFGLRGA) are Cytoplasmic-facing. A helical transmembrane segment spans residues 241–266 (ATLTILLGIFFLCWGPFFLHLTLVVF). At 267 to 279 (CPQHLTCNCIFKN) the chain is on the extracellular side. Residues 280–300 (FKVFLTLIICNTIIDPLIYAF) traverse the membrane as a helical segment. Topologically, residues 301 to 344 (RSQELRRTLKEVLLCSSWPGCWAEGGGDSVWPGSCVTLRGPLPP) are cytoplasmic. Cys315 carries S-palmitoyl cysteine lipidation.

The protein belongs to the G-protein coupled receptor 1 family. As to quaternary structure, interacts with MGRN1, but does not undergo MGRN1-mediated ubiquitination; this interaction competes with GNAS-binding and thus inhibits agonist-induced cAMP production. Interacts with OPN3; the interaction results in a decrease in MC1R-mediated cAMP signaling and ultimately a decrease in melanin production in melanocytes.

It localises to the cell membrane. Functionally, receptor for MSH (alpha, beta and gamma) and ACTH. The activity of this receptor is mediated by G proteins which activate adenylate cyclase. Mediates melanogenesis, the production of eumelanin (black/brown) and phaeomelanin (red/yellow), via regulation of cAMP signaling in melanocytes. This chain is Melanocyte-stimulating hormone receptor (MC1R), found in Callithrix geoffroyi (Geoffroy's marmoset).